We begin with the raw amino-acid sequence, 89 residues long: UPF0237 protein Cgl1544/cg1742 (89 aa).

An ACT domain is found at 4–82; it reads IMTVTGQDHT…LVIRIQSEAL (79 aa).

This sequence belongs to the UPF0237 family.

The chain is UPF0237 protein Cgl1544/cg1742 from Corynebacterium glutamicum (strain ATCC 13032 / DSM 20300 / JCM 1318 / BCRC 11384 / CCUG 27702 / LMG 3730 / NBRC 12168 / NCIMB 10025 / NRRL B-2784 / 534).